Reading from the N-terminus, the 1006-residue chain is DNA polymerase (1006 aa).

The protein belongs to the DNA polymerase type-B family. As to quaternary structure, interacts with OPG148. Component of the Uracil-DNA glycosylase(UDG)-OPG148-polymerase complex; OPG148 and OPG116/UDG form a heterodimeric processivity factor that associates with OPG071 to form the processive polymerase holoenzyme.

The catalysed reaction is DNA(n) + a 2'-deoxyribonucleoside 5'-triphosphate = DNA(n+1) + diphosphate. Catalyzes DNA synthesis. Acquires processivity by associating with a heterodimeric processivity factor comprised of the viral OPG148 and OPG116 proteins, thereby forming the DNA polymerase holoenzyme. Displays 3'- to 5' exonuclease activity. Might participate in viral DNA recombination. Does not perform OPG116/D4synthesis across an abasic site. This is DNA polymerase (OPG071) from Monkeypox virus.